The primary structure comprises 175 residues: Chorismate pyruvate-lyase (175 aa).

Positions 36, 78, 116, and 157 each coordinate substrate.

It belongs to the UbiC family. In terms of assembly, monomer.

The protein resides in the cytoplasm. The enzyme catalyses chorismate = 4-hydroxybenzoate + pyruvate. It participates in cofactor biosynthesis; ubiquinone biosynthesis. Its function is as follows. Removes the pyruvyl group from chorismate, with concomitant aromatization of the ring, to provide 4-hydroxybenzoate (4HB) for the ubiquinone pathway. The chain is Chorismate pyruvate-lyase from Hamiltonella defensa subsp. Acyrthosiphon pisum (strain 5AT).